We begin with the raw amino-acid sequence, 39 residues long: Photosystem II reaction center protein L (39 aa).

The helical transmembrane segment at 18–38 (SLYLGLLLVAVLGILFSSYFF) threads the bilayer.

This sequence belongs to the PsbL family. PSII is composed of 1 copy each of membrane proteins PsbA, PsbB, PsbC, PsbD, PsbE, PsbF, PsbH, PsbI, PsbJ, PsbK, PsbL, PsbM, PsbT, PsbX, PsbY, PsbZ, Psb30/Ycf12, peripheral proteins PsbO, CyanoQ (PsbQ), PsbU, PsbV and a large number of cofactors. It forms dimeric complexes.

Its subcellular location is the cellular thylakoid membrane. Its function is as follows. One of the components of the core complex of photosystem II (PSII). PSII is a light-driven water:plastoquinone oxidoreductase that uses light energy to abstract electrons from H(2)O, generating O(2) and a proton gradient subsequently used for ATP formation. It consists of a core antenna complex that captures photons, and an electron transfer chain that converts photonic excitation into a charge separation. This subunit is found at the monomer-monomer interface and is required for correct PSII assembly and/or dimerization. The sequence is that of Photosystem II reaction center protein L from Rippkaea orientalis (strain PCC 8801 / RF-1) (Cyanothece sp. (strain PCC 8801)).